Here is a 359-residue protein sequence, read N- to C-terminus: Peptide chain release factor 1 (359 aa).

Gln-235 carries the post-translational modification N5-methylglutamine. The span at 282 to 307 (RQRADSERSADRKSQVGSGDRSERIR) shows a compositional bias: basic and acidic residues. The tract at residues 282-309 (RQRADSERSADRKSQVGSGDRSERIRTY) is disordered.

Belongs to the prokaryotic/mitochondrial release factor family. Post-translationally, methylated by PrmC. Methylation increases the termination efficiency of RF1.

It is found in the cytoplasm. Functionally, peptide chain release factor 1 directs the termination of translation in response to the peptide chain termination codons UAG and UAA. The protein is Peptide chain release factor 1 of Allorhizobium ampelinum (strain ATCC BAA-846 / DSM 112012 / S4) (Agrobacterium vitis (strain S4)).